The primary structure comprises 89 residues: Small ribosomal subunit protein uS15 (89 aa).

The span at 1-21 (MVLDPTQKKSVIDAHAKHEGD) shows a compositional bias: basic and acidic residues. The segment at 1 to 24 (MVLDPTQKKSVIDAHAKHEGDTGS) is disordered.

The protein belongs to the universal ribosomal protein uS15 family. As to quaternary structure, part of the 30S ribosomal subunit. Forms a bridge to the 50S subunit in the 70S ribosome, contacting the 23S rRNA.

Functionally, one of the primary rRNA binding proteins, it binds directly to 16S rRNA where it helps nucleate assembly of the platform of the 30S subunit by binding and bridging several RNA helices of the 16S rRNA. Its function is as follows. Forms an intersubunit bridge (bridge B4) with the 23S rRNA of the 50S subunit in the ribosome. The chain is Small ribosomal subunit protein uS15 from Desulfovibrio desulfuricans (strain ATCC 27774 / DSM 6949 / MB).